A 399-amino-acid polypeptide reads, in one-letter code: S-adenosylmethionine synthase (399 aa).

H17 provides a ligand contact to ATP. Residue D19 participates in Mg(2+) binding. E45 serves as a coordination point for K(+). L-methionine contacts are provided by E58 and Q101. A flexible loop region spans residues Q101 to E111. ATP contacts are provided by residues D177–K179, R244–F245, D253, R259–K260, A276, and K280. Position 253 (D253) interacts with L-methionine. An L-methionine-binding site is contributed by K284.

Belongs to the AdoMet synthase family. In terms of assembly, homotetramer; dimer of dimers. Mg(2+) is required as a cofactor. It depends on K(+) as a cofactor.

The protein resides in the cytoplasm. The enzyme catalyses L-methionine + ATP + H2O = S-adenosyl-L-methionine + phosphate + diphosphate. It participates in amino-acid biosynthesis; S-adenosyl-L-methionine biosynthesis; S-adenosyl-L-methionine from L-methionine: step 1/1. Its function is as follows. Catalyzes the formation of S-adenosylmethionine (AdoMet) from methionine and ATP. The overall synthetic reaction is composed of two sequential steps, AdoMet formation and the subsequent tripolyphosphate hydrolysis which occurs prior to release of AdoMet from the enzyme. This chain is S-adenosylmethionine synthase, found in Listeria monocytogenes serovar 1/2a (strain ATCC BAA-679 / EGD-e).